Reading from the N-terminus, the 63-residue chain is Large ribosomal subunit protein uL29 (63 aa).

It belongs to the universal ribosomal protein uL29 family.

In Histophilus somni (strain 129Pt) (Haemophilus somnus), this protein is Large ribosomal subunit protein uL29.